We begin with the raw amino-acid sequence, 633 residues long: Telomere-binding protein 1 (633 aa).

The segment at His-253 to Ser-272 is disordered. The segment covering Ser-263–Ser-272 has biased composition (polar residues). Positions Val-351–Cys-430 constitute a Ubiquitin-like domain. The segment at Pro-506 to Ser-615 is sufficient for telomeric DNA binding. In terms of domain architecture, HTH myb-type spans Gly-529–Ser-588. The SANT domain maps to Arg-534–Val-584. The H-T-H motif DNA-binding region spans Trp-557–Val-584.

In terms of assembly, homodimer. In terms of tissue distribution, ubiquitous.

It localises to the chromosome. The protein resides in the telomere. Its function is as follows. Binds the telomeric double-stranded 5'TTTAGGG-3' repeat and regulates telomere length and structure. The sequence is that of Telomere-binding protein 1 (TBP1) from Oryza sativa subsp. japonica (Rice).